The following is a 100-amino-acid chain: Nucleoid-associated protein MYPU_0500 (100 aa).

It belongs to the YbaB/EbfC family. Homodimer.

It localises to the cytoplasm. The protein resides in the nucleoid. Functionally, binds to DNA and alters its conformation. May be involved in regulation of gene expression, nucleoid organization and DNA protection. The sequence is that of Nucleoid-associated protein MYPU_0500 from Mycoplasmopsis pulmonis (strain UAB CTIP) (Mycoplasma pulmonis).